The primary structure comprises 135 residues: MLSPKRTRFRKQHRGRMKGISYRGNRISFGRYALRALEPAWITSRQIEAGRRAMTRYARRGGKIWVRIFPDKPVTVRPTETRMGSGKGSPEYWVSVVKPGRILYEMGGISEIVAREAISIAASKMPIRTQFVIAG.

It belongs to the universal ribosomal protein uL16 family. As to quaternary structure, part of the 50S ribosomal subunit.

The protein resides in the plastid. The protein localises to the chloroplast. In Platanus occidentalis (Sycamore), this protein is Large ribosomal subunit protein uL16c.